Here is a 266-residue protein sequence, read N- to C-terminus: Uxu operon regulator (266 aa).

An HTH gntR-type domain is found at 23–91 (NRTYTRIGQL…KGSGVYVVRT (69 aa)). A DNA-binding region (H-T-H motif) is located at residues 51–70 (EREISEKFGVSRTIVREAMV).

Functionally, repressor for the uxuRBA operon. This is Uxu operon regulator (uxuR) from Haemophilus influenzae (strain ATCC 51907 / DSM 11121 / KW20 / Rd).